A 529-amino-acid chain; its full sequence is MQQRRPVRRALLSVSDKAGIVEFAQALSARGVELLSTGGTARLLAEKGLPVTEVSDYTGFPEMMDGRVKTLHPKVHGGILGRRGQDDAIMEEHQIQPIDMVVVNLYPFAQTVAREGCSLEDAVENIDIGGPTMVRSAAKNHKDVAIVVKSSDYDAIIKEMDDNEGSLTLATRFDLAIKAFEHTAAYDSMIANYFGSMVPAYHGESKEAAGRFPRTLNLNFIKKQDMRYGENSHQQAAFYIEENVKEASVATATQVQGKALSYNNIADTDAALECVKEFAEPACVIVKHANPCGVAIGNSILDAYDRAYKTDPTSAFGGIIAFNRELDAETAQAIISRQFVEVIIAPSASEEALKITAAKQNVRVLTCGQWGERVPGLDFKRVNGGLLVQDRDLGMVGAEELRVVTQRQPTEQELRDALFCWKVAKFVKSNAIVYAKNNMTIGIGAGQMSRVYSAKIAGIKAADEGLEVKGSSMASDAFFPFRDGIDAAAAAGVTCVIQPGGSIRDDEVIAAADEHGIAMLFTDMRHFRH.

The region spanning 1-148 (MQQRRPVRRA…KNHKDVAIVV (148 aa)) is the MGS-like domain. N6-acetyllysine is present on K287.

This sequence belongs to the PurH family.

The catalysed reaction is (6R)-10-formyltetrahydrofolate + 5-amino-1-(5-phospho-beta-D-ribosyl)imidazole-4-carboxamide = 5-formamido-1-(5-phospho-D-ribosyl)imidazole-4-carboxamide + (6S)-5,6,7,8-tetrahydrofolate. It catalyses the reaction IMP + H2O = 5-formamido-1-(5-phospho-D-ribosyl)imidazole-4-carboxamide. The protein operates within purine metabolism; IMP biosynthesis via de novo pathway; 5-formamido-1-(5-phospho-D-ribosyl)imidazole-4-carboxamide from 5-amino-1-(5-phospho-D-ribosyl)imidazole-4-carboxamide (10-formyl THF route): step 1/1. It functions in the pathway purine metabolism; IMP biosynthesis via de novo pathway; IMP from 5-formamido-1-(5-phospho-D-ribosyl)imidazole-4-carboxamide: step 1/1. The sequence is that of Bifunctional purine biosynthesis protein PurH from Escherichia coli O8 (strain IAI1).